Reading from the N-terminus, the 348-residue chain is Phenylalanine--tRNA ligase alpha subunit (348 aa).

E259 lines the Mg(2+) pocket.

The protein belongs to the class-II aminoacyl-tRNA synthetase family. Phe-tRNA synthetase alpha subunit type 1 subfamily. In terms of assembly, tetramer of two alpha and two beta subunits. Requires Mg(2+) as cofactor.

It is found in the cytoplasm. The catalysed reaction is tRNA(Phe) + L-phenylalanine + ATP = L-phenylalanyl-tRNA(Phe) + AMP + diphosphate + H(+). The sequence is that of Phenylalanine--tRNA ligase alpha subunit from Ligilactobacillus salivarius (strain UCC118) (Lactobacillus salivarius).